We begin with the raw amino-acid sequence, 480 residues long: Lysosomal protective protein (480 aa).

The N-terminal stretch at 1–28 (MIRAAPPPLFLLLLLLLLLVSWASRGEA) is a signal peptide. 4 cysteine pairs are disulfide-bonded: Cys88–Cys362, Cys240–Cys256, Cys241–Cys246, and Cys281–Cys331. A glycan (N-linked (GlcNAc...) asparagine) is linked at Asn145. The active site involves Ser178. N-linked (GlcNAc...) asparagine glycosylation occurs at Asn333. Active-site residues include Asp400 and His457.

It belongs to the peptidase S10 family. As to quaternary structure, heterodimer of a 32 kDa chain and a 20 kDa chain; disulfide-linked.

It is found in the lysosome. The enzyme catalyses Release of a C-terminal amino acid with broad specificity.. In terms of biological role, protective protein appears to be essential for both the activity of beta-galactosidase and neuraminidase, it associates with these enzymes and exerts a protective function necessary for their stability and activity. This protein is also a carboxypeptidase and can deamidate tachykinins. This is Lysosomal protective protein (CTSA) from Homo sapiens (Human).